Reading from the N-terminus, the 165-residue chain is Small ribosomal subunit protein bS16 (165 aa).

Positions 110-165 (LSEANNGPTAEAITEKKKKAREDKEAKEAAEKAAAEKAAAAESEEAPAEEAAAEEA) are disordered. The span at 129–144 (AREDKEAKEAAEKAAA) shows a compositional bias: basic and acidic residues. Residues 151-165 (ESEEAPAEEAAAEEA) are compositionally biased toward acidic residues.

This sequence belongs to the bacterial ribosomal protein bS16 family.

The polypeptide is Small ribosomal subunit protein bS16 (Corynebacterium glutamicum (strain R)).